A 37-amino-acid chain; its full sequence is Large ribosomal subunit protein bL36c (37 aa).

It belongs to the bacterial ribosomal protein bL36 family.

It is found in the plastid. It localises to the chloroplast. This Jasminum nudiflorum (Winter jasmine) protein is Large ribosomal subunit protein bL36c.